The sequence spans 242 residues: MSNLDFCTIYTTTGQIDQLSYAQKAADSGDTCIGMKSKHGVVLLAEKPRVSPLYILESDEKIRKIGNTIGVVCTGMSSDTFYVGCAIKDYVFHHKENFNEDPTPGMMKVYLNDIFHYFTRGINLRVLGANTLTSVYKDGSFSLLHTDCSGKTLSYKAACIGKGTRRIKTELEKLDIDTMTIEEMVDVGVKVLYMAHDPSKDKEFDIEIGIASMETGGDLRKLENHEIRPLVGKYKHISVDED.

Belongs to the peptidase T1A family. In terms of assembly, the 26S proteasome consists of a 20S proteasome core and two 19S regulatory subunits. The 20S proteasome core is composed of 28 subunits that are arranged in four stacked rings, resulting in a barrel-shaped structure. The two end rings are each formed by seven alpha subunits, and the two central rings are each formed by seven beta subunits. The catalytic chamber with the active sites is on the inside of the barrel.

The protein resides in the cytoplasm. It is found in the nucleus. Its function is as follows. The proteasome degrades poly-ubiquitinated proteins in the cytoplasm and in the nucleus. It is essential for the regulated turnover of proteins and for the removal of misfolded proteins. The proteasome is a multicatalytic proteinase complex that is characterized by its ability to cleave peptides with Arg, Phe, Tyr, Leu, and Glu adjacent to the leaving group at neutral or slightly basic pH. It has an ATP-dependent proteolytic activity. The chain is Probable proteasome subunit alpha type-7 (PRE10) from Encephalitozoon cuniculi (strain GB-M1) (Microsporidian parasite).